The sequence spans 461 residues: MSQGKVVQIIGAVVDIEFPQDSVPKIYDALRITEGDLQGLTLEVQQQLGGGVVRTIALGTTDGLRRGLTVDNTGEAIQVPVGKATLGRIMDVLGNPIDEAGPIGEEERMSIHREAPTYEDQSSSIELLETGIKVIDLVCPFAKGGKVGLFGGAGVGKTVNMMELIRNIAIEHSGYSVFAGVGERTREGNDFYHEMNESNVLDKVSLVYGQMNEPPGNRLRVALTGLTMAEKFRDEGRDVLFFVDNIYRYTLAGTEVSALLGRMPSAVGYQPTLAEEMGVLQERIASTKTGSITSIQAVYVPADDLTDPSPATTFAHLDATVVLSRDIASLGIYPAVDPLDSTSRQLDPLVIGQEHYDTARGVQSVLQRYKELKDIIAILGMDELSEEDKLSVSRARKIQRFLSQPFFVAEVFTGSPGKYVSLKDTISGFKGILEGEFDDLPEQAFYMVGSIEEASEKAKKM.

151–158 (GGAGVGKT) contributes to the ATP binding site.

Belongs to the ATPase alpha/beta chains family. As to quaternary structure, F-type ATPases have 2 components, CF(1) - the catalytic core - and CF(0) - the membrane proton channel. CF(1) has five subunits: alpha(3), beta(3), gamma(1), delta(1), epsilon(1). CF(0) has three main subunits: a(1), b(2) and c(9-12). The alpha and beta chains form an alternating ring which encloses part of the gamma chain. CF(1) is attached to CF(0) by a central stalk formed by the gamma and epsilon chains, while a peripheral stalk is formed by the delta and b chains.

It is found in the cell inner membrane. It carries out the reaction ATP + H2O + 4 H(+)(in) = ADP + phosphate + 5 H(+)(out). In terms of biological role, produces ATP from ADP in the presence of a proton gradient across the membrane. The catalytic sites are hosted primarily by the beta subunits. This Pseudoalteromonas atlantica (strain T6c / ATCC BAA-1087) protein is ATP synthase subunit beta 2.